A 224-amino-acid chain; its full sequence is Charged multivesicular body protein 4b (224 aa).

The segment at 1 to 23 (MSVFGKLFGAGGGKAGKGGPTPQ) is disordered. Serine 2 carries the post-translational modification N-acetylserine. Lysine 6 carries the post-translational modification N6-acetyllysine. Residues 8–19 (FGAGGGKAGKGG) are compositionally biased toward gly residues. Positions 23 to 183 (QEAIQRLRDT…EELDKNLLEI (161 aa)) form a coiled coil. Lysine 114 carries the post-translational modification N6-acetyllysine. Residues serine 184 and serine 223 each carry the phosphoserine modification. Residues 185–224 (GPETVPLPNVPSIALPSKPAKKKEEEDDDMKELENWAGSM) are disordered.

Belongs to the SNF7 family. Probable core component of the endosomal sorting required for transport complex III (ESCRT-III). ESCRT-III components are thought to multimerize to form a flat lattice on the perimeter membrane of the endosome. Several assembly forms of ESCRT-III may exist that interact and act sequentially. Interacts with CHMP6 and CHMP4C. Interacts with PDCD6IP; the interaction is direct. Interacts with VPS4A; the interaction is direct. Interacts with VPS4B; the interaction is direct. Interacts with CHMP7. Interacts with CFTR; the interaction requires misfolded CFTR. Interacts with PTPN23. Interacts with CC2D1B. ISGylated. Isgylation weakens its interaction with VPS4A. As to expression, widely expressed. Expressed at higher level in heart and skeletal muscle. Also expressed in brain, colon, thymus, spleen, kidney, liver, small intestine, placenta, lung and peripheral blood lymphocytes.

Its subcellular location is the cytoplasm. The protein resides in the cytosol. It localises to the late endosome membrane. The protein localises to the midbody. It is found in the nucleus envelope. In terms of biological role, probable core component of the endosomal sorting required for transport complex III (ESCRT-III) which is involved in multivesicular bodies (MVBs) formation and sorting of endosomal cargo proteins into MVBs. MVBs contain intraluminal vesicles (ILVs) that are generated by invagination and scission from the limiting membrane of the endosome and mostly are delivered to lysosomes enabling degradation of membrane proteins, such as stimulated growth factor receptors, lysosomal enzymes and lipids. The MVB pathway appears to require the sequential function of ESCRT-O, -I,-II and -III complexes. ESCRT-III proteins mostly dissociate from the invaginating membrane before the ILV is released. The ESCRT machinery also functions in topologically equivalent membrane fission events, such as the terminal stages of cytokinesis. Together with SPAST, the ESCRT-III complex promotes nuclear envelope sealing and mitotic spindle disassembly during late anaphase. Plays a role in the endosomal sorting pathway. ESCRT-III proteins are believed to mediate the necessary vesicle extrusion and/or membrane fission activities, possibly in conjunction with the AAA ATPase VPS4. When overexpressed, membrane-assembled circular arrays of CHMP4B filaments can promote or stabilize negative curvature and outward budding. CHMP4A/B/C are required for the exosomal release of SDCBP, CD63 and syndecan. Majority of the protein exists in a folded closed conformation. Its function is as follows. (Microbial infection) The ESCRT machinery also functions in topologically equivalent membrane fission events, such as the budding of enveloped viruses (HIV-1 and other lentiviruses). Via its interaction with PDCD6IP involved in HIV-1 p6- and p9-dependent virus release. In Homo sapiens (Human), this protein is Charged multivesicular body protein 4b (CHMP4B).